The following is a 72-amino-acid chain: ATP-dependent Clp protease ATP-binding subunit ClpA homolog (72 aa).

This sequence belongs to the ClpA/ClpB family.

The protein localises to the plastid. It localises to the chloroplast. Functionally, may interact with a ClpP-like protease involved in degradation of denatured proteins in the chloroplast. The polypeptide is ATP-dependent Clp protease ATP-binding subunit ClpA homolog (Populus euphratica (Euphrates poplar)).